Here is a 1163-residue protein sequence, read N- to C-terminus: E3 ubiquitin-protein ligase TRIM33 (1163 aa).

The tract at residues 1 to 119 is disordered; sequence MEVEASGTED…ASTSSSSSTP (119 aa). A compositionally biased stretch (basic and acidic residues) spans 27–38; that stretch reads TETKEAADEAKS. Over residues 45–54 the composition is skewed to low complexity; it reads TPTTSSDSSS. Residues 72 to 87 show a composition bias toward pro residues; sequence DPPPPPPPPPPPPPST. Residues 88-99 show a composition bias toward low complexity; that stretch reads PADSTAAAASPA. The RING-type zinc finger occupies 129-188; the sequence is CAVCKQSLQNRDCEPKLLPCLHSFCLKCIPQPDRKITMPVQGPHGQDTRIVNVMRCTVCH. The B box-type 1; atypical zinc-finger motif lies at 215 to 268; it reads NSTQVCTSCEDNASAIGFCVECGEWLCKTCIEAHQRVKFTKDHKIRKKEEVSPE. Residues Cys-220, Cys-223, Cys-244, His-257, Cys-280, His-283, Cys-303, and His-308 each coordinate Zn(2+). The B box-type 2 zinc-finger motif lies at 275-316; the sequence is QRPVFCPVHKQEALKLFCETCDTLTCRDCQLLEHKEHRYQFL. Positions 345 to 369 form a coiled coil; sequence ASEVQKRLKEVAETHKKVEHEIKIA. Over residues 524–533 the composition is skewed to low complexity; it reads MQQAAIAQKH. 5 disordered regions span residues 524 to 555, 575 to 599, 656 to 706, 753 to 848, and 867 to 918; these read MQQA…QQQQ, QIQQ…QMIQ, LQRQ…VITP, TVGP…PLPI, and NVKS…KEDD. The span at 534–548 shows a compositional bias: basic residues; that stretch reads QQQHQHHQQQQHQHQ. The segment covering 580-590 has biased composition (polar residues); that stretch reads MRIASQMSQHP. 2 stretches are compositionally biased toward low complexity: residues 678–691 and 753–797; these read SAAN…ASMA and TVGP…SGTT. Positions 821–830 are enriched in basic and acidic residues; it reads KTERTKDGRR. Over residues 870–889 the composition is skewed to polar residues; the sequence is SEPQSDNLSSCTNPNSRATL. The segment at 921 to 968 adopts a PHD-type zinc-finger fold; that stretch reads EDWCAVCQNGGELLCCDHCPKVFHITCHIPTLKSSPSGDWMCTFCRNL. The region spanning 991–1114 is the Bromo domain; that stretch reads AMSPEEQRRC…LYFEERLLEI (124 aa). Residues 1128–1147 are disordered; that stretch reads TQIEAEKEDSDDSDDDIIQP. The segment covering 1133–1144 has biased composition (acidic residues); sequence EKEDSDDSDDDI.

The protein resides in the nucleus. The enzyme catalyses S-ubiquitinyl-[E2 ubiquitin-conjugating enzyme]-L-cysteine + [acceptor protein]-L-lysine = [E2 ubiquitin-conjugating enzyme]-L-cysteine + N(6)-ubiquitinyl-[acceptor protein]-L-lysine.. It participates in protein modification; protein ubiquitination. Its function is as follows. May act as an E3 ubiquitin-protein ligase and a transcriptional repressor. Involved in the regulation of embryonic and adult hematopoiesis. Required for normal development and survival of both committed erythroid progenitor cells and posterior mesenchymal cells. In Danio rerio (Zebrafish), this protein is E3 ubiquitin-protein ligase TRIM33 (trim33).